A 422-amino-acid chain; its full sequence is Protein UmuC (422 aa).

A UmuC domain is found at 2–188; sequence FALCDVNAFY…LPVDDVWGIG (187 aa).

The protein belongs to the DNA polymerase type-Y family.

Functionally, involved in UV protection and mutation. Poorly processive, error-prone DNA polymerase involved in translesion repair. Essential for induced (or SOS) mutagenesis. Able to replicate DNA across DNA lesions (thymine photodimers and abasic sites, translesion synthesis) in the presence of activated RecA; efficiency is maximal in the presence of the beta sliding-clamp and clamp-loading complex of DNA polymerase III plus single-stranded binding protein (SSB). RecA and to a lesser extent the beta clamp-complex may target Pol V to replication complexes stalled at DNA template lesions. The protein is Protein UmuC (umuC) of Escherichia coli (strain K12).